The following is a 176-amino-acid chain: MIHAILKMGDPRLLRVAAPVERYDTPELRALIDDMFETMAHAQGVGLAAPQIGVDLQLVIFGFERNDRYPDAPAVPRTILCNPVIEPLSDEMEDGWEGCLSVPGLRGLVPRYRHIRYSGYDPAGQRIEREAEGFHARVVQHECDHLIGRLYPTRIRDLTKFGYTEVLFPEMDPNAD.

C99 and H141 together coordinate Fe cation. E142 is a catalytic residue. H145 provides a ligand contact to Fe cation.

It belongs to the polypeptide deformylase family. Requires Fe(2+) as cofactor.

It catalyses the reaction N-terminal N-formyl-L-methionyl-[peptide] + H2O = N-terminal L-methionyl-[peptide] + formate. Removes the formyl group from the N-terminal Met of newly synthesized proteins. Requires at least a dipeptide for an efficient rate of reaction. N-terminal L-methionine is a prerequisite for activity but the enzyme has broad specificity at other positions. In Bordetella pertussis (strain Tohama I / ATCC BAA-589 / NCTC 13251), this protein is Peptide deformylase 1.